Consider the following 651-residue polypeptide: DNA ligase (651 aa).

NAD(+) is bound by residues 32–36, 75–76, and Glu106; these read DAEYD and SL. The N6-AMP-lysine intermediate role is filled by Lys108. Positions 129, 164, 271, and 295 each coordinate NAD(+). Zn(2+) is bound by residues Cys389, Cys392, Cys405, and Cys411. The BRCT domain occupies 575-651; it reads SSDSFLNNKI…LDEEQWNRLC (77 aa).

It belongs to the NAD-dependent DNA ligase family. LigA subfamily. The cofactor is Mg(2+). It depends on Mn(2+) as a cofactor.

It catalyses the reaction NAD(+) + (deoxyribonucleotide)n-3'-hydroxyl + 5'-phospho-(deoxyribonucleotide)m = (deoxyribonucleotide)n+m + AMP + beta-nicotinamide D-nucleotide.. In terms of biological role, DNA ligase that catalyzes the formation of phosphodiester linkages between 5'-phosphoryl and 3'-hydroxyl groups in double-stranded DNA using NAD as a coenzyme and as the energy source for the reaction. It is essential for DNA replication and repair of damaged DNA. In Wolbachia pipientis subsp. Culex pipiens (strain wPip), this protein is DNA ligase.